Here is an 814-residue protein sequence, read N- to C-terminus: Acyl-coenzyme A dehydrogenase (814 aa).

Catalysis depends on E497, which acts as the Proton acceptor.

The protein belongs to the acyl-CoA dehydrogenase family. It depends on FAD as a cofactor.

It carries out the reaction a medium-chain 2,3-saturated fatty acyl-CoA + oxidized [electron-transfer flavoprotein] + H(+) = a medium-chain (2E)-enoyl-CoA + reduced [electron-transfer flavoprotein]. The enzyme catalyses a long-chain 2,3-saturated fatty acyl-CoA + oxidized [electron-transfer flavoprotein] + H(+) = a long-chain (2E)-enoyl-CoA + reduced [electron-transfer flavoprotein]. It functions in the pathway lipid metabolism; fatty acid beta-oxidation. Catalyzes the dehydrogenation of acyl-coenzymes A (acyl-CoAs) to 2-enoyl-CoAs, the first step of the beta-oxidation cycle of fatty acid degradation. Is required for the utilization of medium- and long-chain fatty acids as sole carbon sources for growth. This is Acyl-coenzyme A dehydrogenase (fadE) from Escherichia coli O157:H7.